Reading from the N-terminus, the 243-residue chain is Phosphoribosylaminoimidazole-succinocarboxamide synthase (243 aa).

This sequence belongs to the SAICAR synthetase family.

It catalyses the reaction 5-amino-1-(5-phospho-D-ribosyl)imidazole-4-carboxylate + L-aspartate + ATP = (2S)-2-[5-amino-1-(5-phospho-beta-D-ribosyl)imidazole-4-carboxamido]succinate + ADP + phosphate + 2 H(+). It participates in purine metabolism; IMP biosynthesis via de novo pathway; 5-amino-1-(5-phospho-D-ribosyl)imidazole-4-carboxamide from 5-amino-1-(5-phospho-D-ribosyl)imidazole-4-carboxylate: step 1/2. In Thermosynechococcus vestitus (strain NIES-2133 / IAM M-273 / BP-1), this protein is Phosphoribosylaminoimidazole-succinocarboxamide synthase.